The sequence spans 485 residues: MVAIDLGASSGRVMLASYYPGQQQLTLREVCRFTNQIKSIDGSDVWDIDAIEQSIREGLSQLDSEGIALDSIGIDSWGVDFVLLDKQGKRIGQPVYYRDSRTQGVMARAQQTLGSNAIYRRTGIQFLPFNTLYQLRALSEQQPHLLADVAHLLLIPDYLHYRLTGQLNWEYTNASTTQLLNIETGDWDSDLLAYAGVPAHWFAKPGKPGNTIGYWHSANGQQVPVVAVATHDTASAVLAAPLIDADAAYLSSGTWSLMGFESGTPLTHQQAQCSNITNEGGAEGRYRVLKNIMGLWLLQRATDELQIDDLPQLIEQAARQPACRSLINPNDSRFINPPNMCREIQNACREHQFPVPNTAAQLARCIFDSLAMLYRQVAQELATLRGRPISHLHIVGGGCQNQFLNQLCADACGLNVSMGPVEASTLGNIGSQLISLGEVADVTHYRRIVANNFPLHHLSPHDNSDFAAHWLQFQSLSQLPKELCI.

Alanine 8–arginine 12 is a binding site for ATP. Residues glycine 78 and histidine 231–threonine 233 contribute to the substrate site. Residue aspartate 232 is the Proton acceptor of the active site. Threonine 254 is a binding site for ATP. Asparagine 291 is a substrate binding site. ATP is bound at residue glutamine 299. An intrachain disulfide couples cysteine 348 to cysteine 365. Residue glycine 397 participates in ATP binding. Cysteine 408 and cysteine 412 form a disulfide bridge.

The protein belongs to the rhamnulokinase family. Mg(2+) serves as cofactor.

It carries out the reaction L-rhamnulose + ATP = L-rhamnulose 1-phosphate + ADP + H(+). It functions in the pathway carbohydrate degradation; L-rhamnose degradation; glycerone phosphate from L-rhamnose: step 2/3. Its function is as follows. Involved in the catabolism of L-rhamnose (6-deoxy-L-mannose). Catalyzes the transfer of the gamma-phosphate group from ATP to the 1-hydroxyl group of L-rhamnulose to yield L-rhamnulose 1-phosphate. This chain is Rhamnulokinase, found in Yersinia pestis bv. Antiqua (strain Angola).